Here is a 326-residue protein sequence, read N- to C-terminus: Putative HTH-type transcriptional regulatory protein MmarC5_0898 (326 aa).

Positions 128 to 183 (LRETREKLKISVGELAEISRVSRKTIYKYEQNEANPSAEVAIKIEEYLDVPLIKGI) constitute an HTH cro/C1-type domain. Residues 139–158 (VGELAEISRVSRKTIYKYEQ) constitute a DNA-binding region (H-T-H motif).

The sequence is that of Putative HTH-type transcriptional regulatory protein MmarC5_0898 from Methanococcus maripaludis (strain C5 / ATCC BAA-1333).